Here is a 224-residue protein sequence, read N- to C-terminus: Phosphoribosylformylglycinamidine synthase subunit PurQ (224 aa).

In terms of domain architecture, Glutamine amidotransferase type-1 spans 1–224 (MIAIIKFPGT…ILLRRLGEWA (224 aa)). Cys-84 serves as the catalytic Nucleophile. Catalysis depends on residues His-196 and Glu-198.

Part of the FGAM synthase complex composed of 1 PurL, 1 PurQ and 2 PurS subunits.

Its subcellular location is the cytoplasm. It carries out the reaction N(2)-formyl-N(1)-(5-phospho-beta-D-ribosyl)glycinamide + L-glutamine + ATP + H2O = 2-formamido-N(1)-(5-O-phospho-beta-D-ribosyl)acetamidine + L-glutamate + ADP + phosphate + H(+). The catalysed reaction is L-glutamine + H2O = L-glutamate + NH4(+). It functions in the pathway purine metabolism; IMP biosynthesis via de novo pathway; 5-amino-1-(5-phospho-D-ribosyl)imidazole from N(2)-formyl-N(1)-(5-phospho-D-ribosyl)glycinamide: step 1/2. Its function is as follows. Part of the phosphoribosylformylglycinamidine synthase complex involved in the purines biosynthetic pathway. Catalyzes the ATP-dependent conversion of formylglycinamide ribonucleotide (FGAR) and glutamine to yield formylglycinamidine ribonucleotide (FGAM) and glutamate. The FGAM synthase complex is composed of three subunits. PurQ produces an ammonia molecule by converting glutamine to glutamate. PurL transfers the ammonia molecule to FGAR to form FGAM in an ATP-dependent manner. PurS interacts with PurQ and PurL and is thought to assist in the transfer of the ammonia molecule from PurQ to PurL. In Saccharolobus solfataricus (strain ATCC 35092 / DSM 1617 / JCM 11322 / P2) (Sulfolobus solfataricus), this protein is Phosphoribosylformylglycinamidine synthase subunit PurQ.